The sequence spans 559 residues: Membrane protein insertase YidC (559 aa).

6 helical membrane-spanning segments follow: residues 5–25 (IVNL…WQYF), 332–352 (AIDF…MNFF), 355–375 (YVGN…LLMF), 429–449 (LPIL…YVTI), 474–494 (LFGL…WPIL), and 520–540 (FMPL…LIYW).

It belongs to the OXA1/ALB3/YidC family. Type 1 subfamily. As to quaternary structure, interacts with the Sec translocase complex via SecD. Specifically interacts with transmembrane segments of nascent integral membrane proteins during membrane integration.

It is found in the cell inner membrane. In terms of biological role, required for the insertion and/or proper folding and/or complex formation of integral membrane proteins into the membrane. Involved in integration of membrane proteins that insert both dependently and independently of the Sec translocase complex, as well as at least some lipoproteins. Aids folding of multispanning membrane proteins. The protein is Membrane protein insertase YidC of Rickettsia bellii (strain OSU 85-389).